The following is a 281-amino-acid chain: NADPH-dependent 7-cyano-7-deazaguanine reductase (281 aa).

88 to 90 is a substrate binding site; it reads IES. An NADPH-binding site is contributed by 90–91; that stretch reads SK. Cys-189 serves as the catalytic Thioimide intermediate. The active-site Proton donor is Asp-196. 228-229 is a binding site for substrate; the sequence is HE. 257 to 258 is a binding site for NADPH; sequence RG.

It belongs to the GTP cyclohydrolase I family. QueF type 2 subfamily. Homodimer.

The protein resides in the cytoplasm. It carries out the reaction 7-aminomethyl-7-carbaguanine + 2 NADP(+) = 7-cyano-7-deazaguanine + 2 NADPH + 3 H(+). Its pathway is tRNA modification; tRNA-queuosine biosynthesis. Functionally, catalyzes the NADPH-dependent reduction of 7-cyano-7-deazaguanine (preQ0) to 7-aminomethyl-7-deazaguanine (preQ1). The polypeptide is NADPH-dependent 7-cyano-7-deazaguanine reductase (Yersinia pseudotuberculosis serotype O:1b (strain IP 31758)).